A 62-amino-acid polypeptide reads, in one-letter code: Conotoxin Pn-014 (62 aa).

Residues 1–22 form the signal peptide; sequence MRCLPVFVILLLLIASAPSVDA. Residues 23–48 constitute a propeptide that is removed on maturation; that stretch reads RPKTKDDIPLVSFQDHAKRILQTFES. Trp61 carries the tryptophan amide modification.

It belongs to the conotoxin T superfamily. Contains 2 disulfide bonds that can be either 'C1-C3, C2-C4' or 'C1-C4, C2-C3', since these disulfide connectivities have been observed for conotoxins with cysteine framework V (for examples, see AC P0DQQ7 and AC P81755). Expressed by the venom duct.

Its subcellular location is the secreted. This is Conotoxin Pn-014 from Conus pennaceus (Feathered cone).